The sequence spans 77 residues: Exodeoxyribonuclease 7 small subunit (77 aa).

This sequence belongs to the XseB family. Heterooligomer composed of large and small subunits.

It is found in the cytoplasm. The catalysed reaction is Exonucleolytic cleavage in either 5'- to 3'- or 3'- to 5'-direction to yield nucleoside 5'-phosphates.. Bidirectionally degrades single-stranded DNA into large acid-insoluble oligonucleotides, which are then degraded further into small acid-soluble oligonucleotides. This Chromobacterium violaceum (strain ATCC 12472 / DSM 30191 / JCM 1249 / CCUG 213 / NBRC 12614 / NCIMB 9131 / NCTC 9757 / MK) protein is Exodeoxyribonuclease 7 small subunit.